A 299-amino-acid polypeptide reads, in one-letter code: Ribonuclease H2 subunit A (299 aa).

At Met-1 the chain carries N-acetylmethionine. One can recognise an RNase H type-2 domain in the interval 28 to 250 (PCVLGVDEAG…AQTILEKEAE (223 aa)). A divalent metal cation-binding residues include Asp-34, Glu-35, and Asp-141. Phosphothreonine occurs at positions 204 and 216. 2 positions are modified to phosphoserine: Ser-257 and Ser-277.

Belongs to the RNase HII family. Eukaryotic subfamily. In terms of assembly, the RNase H2 complex is a heterotrimer composed of the catalytic subunit RNASEH2A and the non-catalytic subunits RNASEH2B and RNASEH2C. Mn(2+) is required as a cofactor. It depends on Mg(2+) as a cofactor.

The protein localises to the nucleus. The catalysed reaction is Endonucleolytic cleavage to 5'-phosphomonoester.. Its function is as follows. Catalytic subunit of RNase HII, an endonuclease that specifically degrades the RNA of RNA:DNA hybrids. Participates in DNA replication, possibly by mediating the removal of lagging-strand Okazaki fragment RNA primers during DNA replication. Mediates the excision of single ribonucleotides from DNA:RNA duplexes. In Homo sapiens (Human), this protein is Ribonuclease H2 subunit A (RNASEH2A).